We begin with the raw amino-acid sequence, 215 residues long: Ribonuclease (215 aa).

Residues 1–22 form the signal peptide; it reads MKKIVVLLGMLLAPWFSSAVQA. Active-site residues include histidine 62, glutamate 102, and histidine 106. The tract at residues 144-166 is disordered; sequence KPLPAQGGSGQCQRLAGPGQHHG.

It belongs to the RNase T2 family.

Its subcellular location is the periplasm. It is found in the cytoplasm. One of the few RNases that cleave the phosphodiester bond between any two nucleotide. Shows a preference for adenylic acid. This Aeromonas hydrophila protein is Ribonuclease.